A 213-amino-acid polypeptide reads, in one-letter code: Urease accessory protein UreE (213 aa).

Residues 170–213 form a disordered region; the sequence is EHHGRSHSHSHSHSHDHDHDHDHDHDHDHQHGPSCSHGHGHGHR. The span at 182–200 shows a compositional bias: basic and acidic residues; that stretch reads HSHDHDHDHDHDHDHDHQH.

The protein belongs to the UreE family.

It localises to the cytoplasm. In terms of biological role, involved in urease metallocenter assembly. Binds nickel. Probably functions as a nickel donor during metallocenter assembly. This is Urease accessory protein UreE from Burkholderia thailandensis (strain ATCC 700388 / DSM 13276 / CCUG 48851 / CIP 106301 / E264).